Consider the following 394-residue polypeptide: Argininosuccinate synthase (394 aa).

ATP contacts are provided by residues 7–15 and Ala35; that span reads AYSGGLDTS. Residue Tyr85 coordinates L-citrulline. Gly115 contacts ATP. Thr117, Asn121, and Asp122 together coordinate L-aspartate. Residue Asn121 participates in L-citrulline binding. Residues Arg125, Ser174, Ser183, Glu258, and Tyr270 each contribute to the L-citrulline site.

The protein belongs to the argininosuccinate synthase family. Type 1 subfamily. As to quaternary structure, homotetramer.

The protein localises to the cytoplasm. The enzyme catalyses L-citrulline + L-aspartate + ATP = 2-(N(omega)-L-arginino)succinate + AMP + diphosphate + H(+). The protein operates within amino-acid biosynthesis; L-arginine biosynthesis; L-arginine from L-ornithine and carbamoyl phosphate: step 2/3. In Methanopyrus kandleri (strain AV19 / DSM 6324 / JCM 9639 / NBRC 100938), this protein is Argininosuccinate synthase.